The following is a 401-amino-acid chain: O-methyltransferase mfmE (401 aa).

S-adenosyl-L-methionine contacts are provided by residues 243–244 (GG) and Asp268. His308 serves as the catalytic Proton acceptor.

It belongs to the class I-like SAM-binding methyltransferase superfamily. Cation-independent O-methyltransferase family. COMT subfamily.

It participates in secondary metabolite biosynthesis; terpenoid biosynthesis. Functionally, O-methyltransferase; part of the gene cluster that mediates the biosynthesis of the phthalide-terpenoid hybrid 11'-O-desmethylfendlerol. Within the pathway, mfmE catalyzes the 7-O-methylation of the phthalide 5,7-dihydroxy-4-(hydroxymethyl)-6-methylphthalide to yield 5-hydroxy-4-(hydroxymethyl)-7-methoxy-6-methylphthalide. The biosynthesis of 11'-O-desmethylfendlerol begins with the NR-PKS mfmB that forms 3,5-dimethylorsellinic acid (DMOA), which is then transformed into the phthalide 5,7-dihydroxy-4-(hydroxymethyl)-6-methylphthalide by the cytochrome P450 monooxygenase mfmA and the hydrolase mfmC. Subsequently, the methyltransferase mfmE catalyzes 7-O-methylation to yield 5-hydroxy-4-(hydroxymethyl)-7-methoxy-6-methylphthalide, which undergoes C-3 hydroxylation by the cytochrome P450 monooxygenase mfmF. The resultant cyclopolic acid (2,5-dihydroxy-4-(hydroxymethyl)-7-methoxy-6-methylphthalide) is then farnesylated by the DMATS-type prenyltransferase mfmD to afford 5-O-farnesylcyclopolic acid. Finally, the Pyr4-family terpene cyclase mfmH cyclizes the farnesyl moiety of 5-O-farnesylcyclopolic acid into a drimane-like structure, thus completing the biosynthesis of 11'-O-desmethylfendlerol. In Annulohypoxylon moriforme (Filamentous fungus), this protein is O-methyltransferase mfmE.